Here is a 374-residue protein sequence, read N- to C-terminus: tRNA-specific 2-thiouridylase MnmA (374 aa).

Residues 13 to 20 (GMSGGVDS) and methionine 39 contribute to the ATP site. The interval 99 to 101 (NPD) is interaction with target base in tRNA. The active-site Nucleophile is the cysteine 104. Cysteine 104 and cysteine 201 are oxidised to a cystine. Residue glycine 128 participates in ATP binding. The segment at 151 to 153 (KDQ) is interaction with tRNA. The active-site Cysteine persulfide intermediate is cysteine 201. The tract at residues 313-314 (RY) is interaction with tRNA.

The protein belongs to the MnmA/TRMU family.

The protein resides in the cytoplasm. It carries out the reaction S-sulfanyl-L-cysteinyl-[protein] + uridine(34) in tRNA + AH2 + ATP = 2-thiouridine(34) in tRNA + L-cysteinyl-[protein] + A + AMP + diphosphate + H(+). Catalyzes the 2-thiolation of uridine at the wobble position (U34) of tRNA, leading to the formation of s(2)U34. This chain is tRNA-specific 2-thiouridylase MnmA, found in Streptococcus equi subsp. equi (strain 4047).